Reading from the N-terminus, the 251-residue chain is Flap endonuclease Xni (251 aa).

Asp104 provides a ligand contact to Mg(2+). In terms of domain architecture, 5'-3' exonuclease spans 160–249 (VLPRQLPDYW…IDGNLQQLRL (90 aa)). Leu171, Ala172, Pro180, Val182, and Ile185 together coordinate K(+). The interval 184 to 189 (GIGPKS) is interaction with DNA.

This sequence belongs to the Xni family. Mg(2+) serves as cofactor. It depends on K(+) as a cofactor.

Functionally, has flap endonuclease activity. During DNA replication, flap endonucleases cleave the 5'-overhanging flap structure that is generated by displacement synthesis when DNA polymerase encounters the 5'-end of a downstream Okazaki fragment. The polypeptide is Flap endonuclease Xni (Salmonella choleraesuis (strain SC-B67)).